We begin with the raw amino-acid sequence, 139 residues long: Putative pre-16S rRNA nuclease (139 aa).

Belongs to the YqgF nuclease family.

Its subcellular location is the cytoplasm. In terms of biological role, could be a nuclease involved in processing of the 5'-end of pre-16S rRNA. The polypeptide is Putative pre-16S rRNA nuclease (Legionella pneumophila (strain Lens)).